Here is a 528-residue protein sequence, read N- to C-terminus: Chaperonin GroEL, chloroplastic (528 aa).

Residues 29-32 (TLGP), 86-90 (DGTTT), Gly414, and Asp496 contribute to the ATP site.

This sequence belongs to the chaperonin (HSP60) family. As to quaternary structure, forms a cylinder of 14 subunits composed of two heptameric rings stacked back-to-back. Interacts with the co-chaperonin GroES.

It is found in the plastid. It localises to the chloroplast. The enzyme catalyses ATP + H2O + a folded polypeptide = ADP + phosphate + an unfolded polypeptide.. Its function is as follows. Together with its co-chaperonin GroES, plays an essential role in assisting protein folding. The GroEL-GroES system forms a nano-cage that allows encapsulation of the non-native substrate proteins and provides a physical environment optimized to promote and accelerate protein folding. This is Chaperonin GroEL, chloroplastic from Gracilaria tenuistipitata var. liui (Red alga).